The following is a 257-amino-acid chain: Phycoerythrobilin:ferredoxin oxidoreductase (257 aa).

The protein belongs to the HY2 family.

It catalyses the reaction (3Z)-phycoerythrobilin + oxidized 2[4Fe-4S]-[ferredoxin] = 15,16-dihydrobiliverdin + reduced 2[4Fe-4S]-[ferredoxin] + 2 H(+). Functionally, catalyzes the two-electron reduction of the C2 and C3(1) diene system of 15,16-dihydrobiliverdin. The polypeptide is Phycoerythrobilin:ferredoxin oxidoreductase (pebB) (Prochlorococcus marinus subsp. pastoris (strain CCMP1986 / NIES-2087 / MED4)).